The following is a 351-amino-acid chain: Probable aldo-keto reductase 2 (351 aa).

Tyr67 functions as the Proton donor in the catalytic mechanism. His134 contributes to the substrate binding site. 213–223 (SPLGRGFFSAG) lines the NADP(+) pocket. Residues 317 to 351 (YASTDDVRGDRYPQAMANTTWQNSETPPLSSWKAQ) form a disordered region. Residues 332-351 (MANTTWQNSETPPLSSWKAQ) show a composition bias toward polar residues.

It belongs to the aldo/keto reductase family.

The chain is Probable aldo-keto reductase 2 from Oryza sativa subsp. japonica (Rice).